The following is a 666-amino-acid chain: Long chain acyl-CoA synthetase 5 (666 aa).

228–239 (IMYTSGTTGDPK) contacts ATP. The tract at residues 495–519 (DGWLHTGDVGEWQPNGSMKIIDRKK) is fatty acid-binding.

This sequence belongs to the ATP-dependent AMP-binding enzyme family. Mg(2+) is required as a cofactor.

The catalysed reaction is a long-chain fatty acid + ATP + CoA = a long-chain fatty acyl-CoA + AMP + diphosphate. The protein operates within lipid metabolism; fatty acid metabolism. Activation of long-chain fatty acids for both synthesis of cellular lipids, and degradation via beta-oxidation. Preferentially uses palmitate, palmitoleate, oleate and linoleate. In Arabidopsis thaliana (Mouse-ear cress), this protein is Long chain acyl-CoA synthetase 5 (LACS5).